The primary structure comprises 98 residues: NADH-ubiquinone oxidoreductase chain 4L (98 aa).

3 helical membrane passes run 2–22, 29–49, and 61–81; these read PSIS…MLMF, SLLC…LTIL, and ILLL…LVMV.

It belongs to the complex I subunit 4L family. As to quaternary structure, core subunit of respiratory chain NADH dehydrogenase (Complex I) which is composed of 45 different subunits.

Its subcellular location is the mitochondrion inner membrane. It catalyses the reaction a ubiquinone + NADH + 5 H(+)(in) = a ubiquinol + NAD(+) + 4 H(+)(out). Core subunit of the mitochondrial membrane respiratory chain NADH dehydrogenase (Complex I) which catalyzes electron transfer from NADH through the respiratory chain, using ubiquinone as an electron acceptor. Part of the enzyme membrane arm which is embedded in the lipid bilayer and involved in proton translocation. In Microcebus simmonsi (Simmons's mouse lemur), this protein is NADH-ubiquinone oxidoreductase chain 4L (MT-ND4L).